The following is a 585-amino-acid chain: Arginine--tRNA ligase (585 aa).

The short motif at 127–137 (PNTNKPLHVGH) is the 'HIGH' region element.

Belongs to the class-I aminoacyl-tRNA synthetase family. As to quaternary structure, monomer.

Its subcellular location is the cytoplasm. It carries out the reaction tRNA(Arg) + L-arginine + ATP = L-arginyl-tRNA(Arg) + AMP + diphosphate. The protein is Arginine--tRNA ligase (argS) of Borreliella burgdorferi (strain ATCC 35210 / DSM 4680 / CIP 102532 / B31) (Borrelia burgdorferi).